The following is a 158-amino-acid chain: SKP1-like protein 18 (158 aa).

Residues 99-157 (ILAANYLNFEGLLGFASQTVADYIKDKTPEEVREIFNIENDFTPEEEEEIRKENAWTFN) are interaction with the F-box domain of F-box proteins.

The protein belongs to the SKP1 family. As to quaternary structure, part of a SCF (SKP1-cullin-F-box) protein ligase complex. Interacts with CPR1/CPR30, EBF1, SKP2A, At3g61590, At4g38940 and At5g49610. In terms of tissue distribution, expressed in young seedlings, roots, leaves, floral stems, inflorescences, pollen, and siliques.

It localises to the nucleus. It participates in protein modification; protein ubiquitination. Involved in ubiquitination and subsequent proteasomal degradation of target proteins. Together with CUL1, RBX1 and a F-box protein, it forms a SCF E3 ubiquitin ligase complex. The functional specificity of this complex depends on the type of F-box protein. In the SCF complex, it serves as an adapter that links the F-box protein to CUL1. The sequence is that of SKP1-like protein 18 (ASK18) from Arabidopsis thaliana (Mouse-ear cress).